The primary structure comprises 1030 residues: Zinc finger and SCAN domain-containing protein 20 (1030 aa).

The tract at residues 22-42 (DSWGSDSRPEKESHSPVPGPE) is disordered. An SCAN box domain is found at 45–127 (RRCFRQFRYR…ALVEDWHREA (83 aa)). Disordered regions lie at residues 178-201 (DLSK…PTVP), 213-285 (GKSQ…DSAQ), 411-441 (SGGP…WEPE), and 578-600 (TGLP…GEME). Over residues 225 to 240 (AKKEPCQDPAGGDRGD) the composition is skewed to basic and acidic residues. Composition is skewed to acidic residues over residues 426–441 (SDTE…WEPE) and 589–600 (EADDQEAWGEME). The C2H2-type 1; degenerate zinc finger occupies 697–719 (YGCDTRAKSFSRKVHFFAPQRTH). The C2H2-type 2; degenerate zinc finger occupies 725–747 (YKCLGSGKSFSDRANLSTHQRIH). 2 C2H2-type zinc fingers span residues 753–775 (YRCL…QRTH) and 781–803 (YKCG…QRVH). Disordered regions lie at residues 801 to 820 (RVHL…NFGQ) and 828 to 850 (WRRN…ADSP). C2H2-type zinc fingers lie at residues 862–884 (YSCP…QRIH), 890–912 (YECA…RRTH), 918–940 (HKCA…QRVH), 946–968 (YECP…QRIH), 974–996 (YKCR…QRIH), and 1002–1024 (YKCT…RRTH).

This sequence belongs to the krueppel C2H2-type zinc-finger protein family.

The protein resides in the nucleus. Its function is as follows. May be involved in transcriptional regulation. The sequence is that of Zinc finger and SCAN domain-containing protein 20 (Zscan20) from Mus musculus (Mouse).